Consider the following 181-residue polypeptide: Ferritin (181 aa).

Residues 6 to 155 (RHNYHEDCEP…NLITRLKRAG (150 aa)) form the Ferritin-like diiron domain. Residues Glu23, Glu58, His61, Glu103, and Gln137 each coordinate Fe cation.

It belongs to the ferritin family. As to quaternary structure, oligomer of 12 or 24 subunits. The functional molecule is roughly spherical and contains a central cavity into which the polymeric mineral iron core is deposited. Post-translationally, the N-terminus is blocked.

Its subcellular location is the cytoplasm. It carries out the reaction 4 Fe(2+) + O2 + 4 H(+) = 4 Fe(3+) + 2 H2O. In terms of biological role, stores iron in a soluble, non-toxic, readily available form. Important for iron homeostasis. Has ferroxidase activity. Iron is taken up in the ferrous form and deposited as ferric hydroxides after oxidation. The sequence is that of Ferritin from Pacifastacus leniusculus (Signal crayfish).